The following is a 1037-amino-acid chain: Protein brain tumor (1037 aa).

2 disordered regions span residues 29 to 63 and 159 to 178; these read SDSP…SRSE and SNSS…SPPR. 2 stretches are compositionally biased toward polar residues: residues 31–42 and 54–63; these read SPLTLSGSSPPA and GGSSVKSRSE. Positions 159–175 are enriched in low complexity; sequence SNSSSNSSSSNTSANGS. The B box-type 1; atypical zinc finger occupies 174-222; the sequence is GSPPRCTACKSKCSDAVAKCFECQSYLCANCVTAHEFMHCFNGHNVCLI. The Zn(2+) site is built by cysteine 179, cysteine 182, cysteine 204, histidine 208, cysteine 328, histidine 331, cysteine 351, and histidine 356. Residues 323 to 366 form a B box-type 2 zinc finger; that stretch reads QRQLFCPRHKQELLKFSCRTCCILVCKECIVLEHSTGLHELENV. A compositionally biased stretch (polar residues) spans 543-554; the sequence is GPTGMSLTSNGH. The segment at 543-606 is disordered; that stretch reads GPTGMSLTSN…TAHHQQLQAQ (64 aa). Over residues 565–577 the composition is skewed to low complexity; the sequence is QSASNSSASSAGS. Positions 579 to 598 are enriched in basic residues; the sequence is HHGHHQQSHHHGHHNHHQTA. NHL repeat units lie at residues 767–810, 814–859, 860–901, 902–944, and 945–988; these read HCKF…FDKE, KFQF…YNQY, GQFV…FDQN, GNVL…FNYE, and GQYL…FTQD.

In terms of assembly, interacts with nanos (nos) and pum. Acts via the formation of a quaternary complex composed of pum, nanos, brat and the 3'-UTR mRNA of hb. Not recruited by nanos and pum to cyclin B 3'-UTR mRNA. Might interact with mira; the interaction seems to be important for brat localization during mitosis. Interacts with Ago1. Expressed during embryogenesis, mainly in nervous tissues. Expressed in the embryonic central and peripheral nervous systems including the embryonic brain. In third instar larva it is expressed in the larval central nervous system including the brain and the ventral ganglion, in two glands (the ring gland and the salivary gland, and in parts of the foregut) the gastric caeca and the proventriculus.

Its subcellular location is the cytoplasm. The protein localises to the cell cortex. In terms of biological role, a NHL-domain family protein that functions as a translational repressor to inhibit cell proliferation. Plays a central role in translation repression of hb mRNA by being recruited by nanos (nos) and pum to the Nanos Response Element (NRE), a 16 bp sequence in the hb mRNA 3'-UTR. Probably recruited by other proteins to repress translation of other mRNAs in other tissues. Negatively regulates expression of Myc in a 3'-UTR dependent manner in both neural progenitor and epithelial cells. Regulates expression of mei-P26, possibly at transcriptional level. Involved in the regulation of ribosomal RNA synthesis and cell growth. Participates in abdominal segmentation and imaginal disk development. During neuroblast division, segregates asymmetrically and inhibits self-renewal of one of the two daughter cells. Together with the asymmetrically segregating transcription factor prospero ensures that the daughter cell will stop growing, exit the cell cycle, and differentiate into neurons possibly by modulating the function of dm in ganglion mother cells (GMC). Restricts developmental potential of type II intermediary neuronal progenitor (INP) cells playing a role in proliferation and maturation of the neuroblasts. The sequence is that of Protein brain tumor from Drosophila melanogaster (Fruit fly).